We begin with the raw amino-acid sequence, 188 residues long: Protein GrpE (188 aa).

Positions 1-22 (MADEQTLDTQNLDANQAPEASG) are disordered.

Belongs to the GrpE family. Homodimer.

Its subcellular location is the cytoplasm. Participates actively in the response to hyperosmotic and heat shock by preventing the aggregation of stress-denatured proteins, in association with DnaK and GrpE. It is the nucleotide exchange factor for DnaK and may function as a thermosensor. Unfolded proteins bind initially to DnaJ; upon interaction with the DnaJ-bound protein, DnaK hydrolyzes its bound ATP, resulting in the formation of a stable complex. GrpE releases ADP from DnaK; ATP binding to DnaK triggers the release of the substrate protein, thus completing the reaction cycle. Several rounds of ATP-dependent interactions between DnaJ, DnaK and GrpE are required for fully efficient folding. This chain is Protein GrpE, found in Pseudomonas fluorescens (strain ATCC BAA-477 / NRRL B-23932 / Pf-5).